The chain runs to 272 residues: Indole-3-glycerol phosphate synthase (272 aa).

Belongs to the TrpC family.

The enzyme catalyses 1-(2-carboxyphenylamino)-1-deoxy-D-ribulose 5-phosphate + H(+) = (1S,2R)-1-C-(indol-3-yl)glycerol 3-phosphate + CO2 + H2O. Its pathway is amino-acid biosynthesis; L-tryptophan biosynthesis; L-tryptophan from chorismate: step 4/5. The chain is Indole-3-glycerol phosphate synthase from Mycolicibacterium vanbaalenii (strain DSM 7251 / JCM 13017 / BCRC 16820 / KCTC 9966 / NRRL B-24157 / PYR-1) (Mycobacterium vanbaalenii).